The chain runs to 382 residues: Serine protease 23 (382 aa).

The first 22 residues, 1–22, serve as a signal peptide directing secretion; sequence MAGIPGLFILLVLLCVFMQVSP. N92 is a glycosylation site (N-linked (GlcNAc...) asparagine). Cysteines 159 and 175 form a disulfide. H174 acts as the Charge relay system in catalysis. N-linked (GlcNAc...) asparagine glycosylation is present at N206. Active-site charge relay system residues include D239 and S315.

Belongs to the peptidase S1 family.

Its subcellular location is the secreted. The sequence is that of Serine protease 23 (Prss23) from Mus musculus (Mouse).